The chain runs to 96 residues: Beta-defensin 132 (96 aa).

The first 22 residues, 1–22 (MKFLLLVLAALRFLTQVIPASG), serve as a signal peptide directing secretion. Intrachain disulfides connect Cys27-Cys55, Cys35-Cys49, and Cys39-Cys56. The segment at 74 to 96 (HWQSRRRNTQRKDKKQQTTVTSS) is disordered. Residues 76 to 87 (QSRRRNTQRKDK) are compositionally biased toward basic residues.

The protein belongs to the beta-defensin family.

It is found in the secreted. Its function is as follows. Has antibacterial activity. The sequence is that of Beta-defensin 132 (DEFB132) from Hylobates lar (Lar gibbon).